The following is a 156-amino-acid chain: Small ribosomal subunit protein uS7 (156 aa).

The protein belongs to the universal ribosomal protein uS7 family. As to quaternary structure, part of the 30S ribosomal subunit. Contacts proteins S9 and S11.

Its function is as follows. One of the primary rRNA binding proteins, it binds directly to 16S rRNA where it nucleates assembly of the head domain of the 30S subunit. Is located at the subunit interface close to the decoding center, probably blocks exit of the E-site tRNA. In Methylibium petroleiphilum (strain ATCC BAA-1232 / LMG 22953 / PM1), this protein is Small ribosomal subunit protein uS7.